A 158-amino-acid polypeptide reads, in one-letter code: NAD(P)H-quinone oxidoreductase subunit N (158 aa).

The protein belongs to the complex I NdhN subunit family. NDH-1 can be composed of about 15 different subunits; different subcomplexes with different compositions have been identified which probably have different functions.

It localises to the cellular thylakoid membrane. The enzyme catalyses a plastoquinone + NADH + (n+1) H(+)(in) = a plastoquinol + NAD(+) + n H(+)(out). It catalyses the reaction a plastoquinone + NADPH + (n+1) H(+)(in) = a plastoquinol + NADP(+) + n H(+)(out). Its function is as follows. NDH-1 shuttles electrons from an unknown electron donor, via FMN and iron-sulfur (Fe-S) centers, to quinones in the respiratory and/or the photosynthetic chain. The immediate electron acceptor for the enzyme in this species is believed to be plastoquinone. Couples the redox reaction to proton translocation, and thus conserves the redox energy in a proton gradient. Cyanobacterial NDH-1 also plays a role in inorganic carbon-concentration. This Cyanothece sp. (strain PCC 7425 / ATCC 29141) protein is NAD(P)H-quinone oxidoreductase subunit N.